The primary structure comprises 211 residues: Probable nicotinate-nucleotide adenylyltransferase (211 aa).

This sequence belongs to the NadD family.

It carries out the reaction nicotinate beta-D-ribonucleotide + ATP + H(+) = deamido-NAD(+) + diphosphate. The protein operates within cofactor biosynthesis; NAD(+) biosynthesis; deamido-NAD(+) from nicotinate D-ribonucleotide: step 1/1. Catalyzes the reversible adenylation of nicotinate mononucleotide (NaMN) to nicotinic acid adenine dinucleotide (NaAD). The protein is Probable nicotinate-nucleotide adenylyltransferase of Gemmatimonas aurantiaca (strain DSM 14586 / JCM 11422 / NBRC 100505 / T-27).